The chain runs to 280 residues: 3-hydroxyanthranilate 3,4-dioxygenase (280 aa).

Residues 1–160 form a domain A (catalytic) region; sequence MAIPVNVKKW…SEQYKSGKPD (160 aa). Arg43 is a binding site for O2. Residues His47, Glu53, and His91 each coordinate Fe cation. Glu53 provides a ligand contact to substrate. Residues Arg95 and Glu105 each coordinate substrate. The linker stretch occupies residues 161–177; sequence PAQPIGKMPFFLNTEQV. The domain B stretch occupies residues 178 to 280; that stretch reads MEPFSFQNWL…IALSTSQVPA (103 aa).

Belongs to the 3-HAO family. Monomer. Fe(2+) serves as cofactor.

It localises to the cytoplasm. The protein localises to the cytosol. It catalyses the reaction 3-hydroxyanthranilate + O2 = (2Z,4Z)-2-amino-3-carboxymuconate 6-semialdehyde. It participates in cofactor biosynthesis; NAD(+) biosynthesis; quinolinate from L-kynurenine: step 3/3. In terms of biological role, catalyzes the oxidative ring opening of 3-hydroxyanthranilate to 2-amino-3-carboxymuconate semialdehyde, which spontaneously cyclizes to quinolinate. In Xenopus tropicalis (Western clawed frog), this protein is 3-hydroxyanthranilate 3,4-dioxygenase (haao).